We begin with the raw amino-acid sequence, 494 residues long: Maintenance of mitochondrial morphology protein 1 (494 aa).

Residues 1 to 25 (MGDDQSLRSTVAENDISANLSFTQG) are Lumenal-facing. A helical membrane pass occupies residues 26 to 46 (FLLGQLSVVLLIGAFIKFFIF). The Cytoplasmic segment spans residues 47 to 494 (GEAPPPPSRG…GTLPGGAAAN (448 aa)). 3 disordered regions span residues 53–99 (PSRG…VPSS), 278–330 (PPLH…KSNV), and 395–494 (RTGV…AAAN). A compositionally biased stretch (basic residues) spans 57–67 (LSHRASTHRRS). Polar residues-rich tracts occupy residues 68–81 (NSIY…GTSR) and 88–99 (STSNVLRPVPSS). In terms of domain architecture, SMP-LTD spans 134 to 387 (QPESLDWFNV…EPRVQVVGLP (254 aa)). Residues 278–290 (PPLHTPSPSPSPP) are compositionally biased toward pro residues. 2 stretches are compositionally biased toward polar residues: residues 300-318 (THPT…NAQE) and 406-415 (TGSNAASRSA). Positions 425–437 (RADDIGREPDGLR) are enriched in basic and acidic residues.

This sequence belongs to the MMM1 family. In terms of assembly, homodimer. Component of the ER-mitochondria encounter structure (ERMES) or MDM complex, composed of mmm1, mdm10, mdm12 and mdm34. A mmm1 homodimer associates with one molecule of mdm12 on each side in a pairwise head-to-tail manner, and the SMP-LTD domains of mmm1 and mdm12 generate a continuous hydrophobic tunnel for phospholipid trafficking.

The protein resides in the endoplasmic reticulum membrane. Functionally, component of the ERMES/MDM complex, which serves as a molecular tether to connect the endoplasmic reticulum (ER) and mitochondria. Components of this complex are involved in the control of mitochondrial shape and protein biogenesis, and function in nonvesicular lipid trafficking between the ER and mitochondria. The mdm12-mmm1 subcomplex functions in the major beta-barrel assembly pathway that is responsible for biogenesis of all outer membrane beta-barrel proteins, and acts in a late step after the SAM complex. The mdm10-mdm12-mmm1 subcomplex further acts in the TOM40-specific pathway after the action of the mdm12-mmm1 complex. Essential for establishing and maintaining the structure of mitochondria and maintenance of mtDNA nucleoids. The protein is Maintenance of mitochondrial morphology protein 1 of Aspergillus oryzae (strain ATCC 42149 / RIB 40) (Yellow koji mold).